Here is a 108-residue protein sequence, read N- to C-terminus: Parvalbumin beta (108 aa).

2 consecutive EF-hand domains span residues 38–73 and 77–108; these read KSTD…FSST and LTAA…LVKA. Ca(2+)-binding residues include aspartate 51, aspartate 53, serine 55, phenylalanine 57, glutamate 59, glutamate 62, aspartate 90, aspartate 92, aspartate 94, lysine 96, and glutamate 101.

It belongs to the parvalbumin family.

Functionally, in muscle, parvalbumin is thought to be involved in relaxation after contraction. It binds two calcium ions. This Graptemys geographica (Common map turtle) protein is Parvalbumin beta.